Consider the following 555-residue polypeptide: (+)-delta-cadinene synthase isozyme A (555 aa).

A disordered region spans residues 1 to 22 (MASQASQVLASPHPAISSENRP). Residues Asp308, Asp312, Asp452, and Glu456 each contribute to the Mg(2+) site. Residues 308–312 (DDTYD) carry the DDXXD motif motif.

It belongs to the terpene synthase family. Mg(2+) is required as a cofactor.

It catalyses the reaction (2E,6E)-farnesyl diphosphate = (1S,8aR)-delta-cadinene + diphosphate. The protein operates within secondary metabolite biosynthesis; terpenoid biosynthesis. Responsible for the cyclization of trans,trans-farnesyl diphosphate (FPP) to (+)-delta cadinene. This chain is (+)-delta-cadinene synthase isozyme A (CAD1-A), found in Gossypium arboreum (Tree cotton).